The following is a 486-amino-acid chain: MVKLVSLLDSLYGYKMIHEGNPDIHSIHMDSREVVEGGLFFCIKGYTVDGHDYAQQAVSNGAVAVVSERPLELSVPVVVVRDSRRAMAQVATKFYGEPTNDLQLIGVTGTNGKTTITHLIEKIMQDQGKMTGLIGTMYTKIGHELKETKNTTPESLVLQRTFADMKKSGVTTAMMEVSSHALQSGRVRGCDFDVAVFSNLTPDHLDYHGTMERYKFAKGLLFAQLGNTYQGKVAVLNADDPASADFAEMTIAQVVTYGIENEADFQAENVRITSTGTTFELAAFEERMELSIHLIGKFSVYNVLAAAAAAYVSGVPLQEIKKSLEEVKGVAGRFETVKHDQPFTVIVDYAHTPDSLENVLKTVGELAKGDVRVVVGCGGDRDKTKRPVMAEIATTFANQAIFTSDNPRSEEPMDILRDMEQGAKGDSYLMIEDRKEAIFKAIELAKEDDIIVIAGKGHETYQQFRDRTIDFDDRIVAQQAIKERWT.

Position 31 (serine 31) interacts with UDP-N-acetyl-alpha-D-muramoyl-L-alanyl-D-glutamate. Residue 109-115 (GTNGKTT) coordinates ATP. UDP-N-acetyl-alpha-D-muramoyl-L-alanyl-D-glutamate-binding positions include asparagine 150, 151–152 (TT), serine 178, and arginine 186. Lysine 218 is subject to N6-carboxylysine. Residues arginine 381, 405 to 408 (DNPR), glycine 455, and glutamate 459 contribute to the meso-2,6-diaminopimelate site. The Meso-diaminopimelate recognition motif motif lies at 405–408 (DNPR).

The protein belongs to the MurCDEF family. MurE subfamily. Requires Mg(2+) as cofactor. In terms of processing, carboxylation is probably crucial for Mg(2+) binding and, consequently, for the gamma-phosphate positioning of ATP.

It localises to the cytoplasm. It carries out the reaction UDP-N-acetyl-alpha-D-muramoyl-L-alanyl-D-glutamate + meso-2,6-diaminopimelate + ATP = UDP-N-acetyl-alpha-D-muramoyl-L-alanyl-gamma-D-glutamyl-meso-2,6-diaminopimelate + ADP + phosphate + H(+). It participates in cell wall biogenesis; peptidoglycan biosynthesis. Its function is as follows. Catalyzes the addition of meso-diaminopimelic acid to the nucleotide precursor UDP-N-acetylmuramoyl-L-alanyl-D-glutamate (UMAG) in the biosynthesis of bacterial cell-wall peptidoglycan. The polypeptide is UDP-N-acetylmuramoyl-L-alanyl-D-glutamate--2,6-diaminopimelate ligase (Halalkalibacterium halodurans (strain ATCC BAA-125 / DSM 18197 / FERM 7344 / JCM 9153 / C-125) (Bacillus halodurans)).